The primary structure comprises 485 residues: Transcription factor ETV6 (485 aa).

Residues 1–10 (MSETPAQSSI) show a composition bias toward polar residues. A disordered region spans residues 1 to 32 (MSETPAQSSIKQERISYTPPESPVASHRSSTP). The residue at position 11 (K11) is an N6-acetyllysine; alternate. A Glycyl lysine isopeptide (Lys-Gly) (interchain with G-Cter in SUMO2); alternate cross-link involves residue K11. T18 is modified (phosphothreonine). S22 bears the Phosphoserine mark. One can recognise a PNT domain in the interval 41–125 (ALRMEEDSIH…ELLQHILKQR (85 aa)). The tract at residues 157 to 210 (NCVQRTPRTPAESVHHNPPTIELLHRPRSPITTNHRPSPDPEQQRPQRSPLDNM) is disordered. Phosphothreonine is present on T165. 3 positions are modified to phosphoserine: S215, S240, and S251. K284 is covalently cross-linked (Glycyl lysine isopeptide (Lys-Gly) (interchain with G-Cter in SUMO2)). K298 is subject to N6-acetyllysine; alternate. A Glycyl lysine isopeptide (Lys-Gly) (interchain with G-Cter in SUMO2); alternate cross-link involves residue K298. S319 is subject to Phosphoserine. A DNA-binding region (ETS) is located at residues 335 to 416 (RLLWDYVYQL…PGQRLLFRFM (82 aa)). Glycyl lysine isopeptide (Lys-Gly) (interchain with G-Cter in SUMO2) cross-links involve residues K399 and K417. The interval 440–485 (EQTYQEDEPTIASPVGWPRGNLPTGTAGGVMEAGELGVAVKEETRE) is disordered.

It belongs to the ETS family. Can form homodimers or heterodimers with TEL2 or FLI1. Interacts with L3MBTL1 and HDAC9.

Its subcellular location is the nucleus. Functionally, transcriptional repressor; binds to the DNA sequence 5'-CCGGAAGT-3'. Plays a role in hematopoiesis and malignant transformation. This Mus musculus (Mouse) protein is Transcription factor ETV6 (Etv6).